We begin with the raw amino-acid sequence, 905 residues long: Probable cation-transporting ATPase F (905 aa).

Transmembrane regions (helical) follow at residues 84 to 104, 248 to 268, and 283 to 303; these read EFVDAAVIFGVVVINAIVGFI, FSKFLTIAILGLAALTFGVGL, and ALAVGAIPEGLPTAVTITLAI. The active-site 4-aspartylphosphate intermediate is the aspartate 333. Mg(2+) is bound by residues aspartate 643 and aspartate 647. Transmembrane regions (helical) follow at residues 716–736, 738–758, 778–798, 808–828, 842–862, and 872–892; these read ILAAIAVGVALPILPTQILWI, MTTAIALGLMLAFEPKEAGIM, TLLVSTLLVASAWWLFAWELD, TAALNLFVVVEAFYLFSCRSL, WIILGVSAQAIAQFAITYLPA, and IDIGVWVRIFAVATAITIVVA.

The protein belongs to the cation transport ATPase (P-type) (TC 3.A.3) family. Type IIA subfamily.

The protein resides in the cell membrane. It carries out the reaction ATP + H2O = ADP + phosphate + H(+). The protein is Probable cation-transporting ATPase F (ctpF) of Mycobacterium bovis (strain ATCC BAA-935 / AF2122/97).